The chain runs to 611 residues: Chaperone protein DnaK (611 aa).

Thr173 is modified (phosphothreonine; by autocatalysis). The segment covering 579-592 (AAGQAEGAQGAQDA) has biased composition (low complexity). A disordered region spans residues 579 to 598 (AAGQAEGAQGAQDAGAKKDN).

The protein belongs to the heat shock protein 70 family.

In terms of biological role, acts as a chaperone. The protein is Chaperone protein DnaK of Bacillus cereus (strain B4264).